We begin with the raw amino-acid sequence, 208 residues long: Small ribosomal subunit protein uS3 (208 aa).

Residues 16–85 form the KH type-2 domain; it reads IDEYFKKELS…KPQIDVKPVE (70 aa).

The protein belongs to the universal ribosomal protein uS3 family. As to quaternary structure, part of the 30S ribosomal subunit.

Functionally, binds the lower part of the 30S subunit head. The sequence is that of Small ribosomal subunit protein uS3 from Methanocaldococcus jannaschii (strain ATCC 43067 / DSM 2661 / JAL-1 / JCM 10045 / NBRC 100440) (Methanococcus jannaschii).